The sequence spans 301 residues: B3 domain-containing protein At5g18090 (301 aa).

The segment at residues 18-113 (FFKILRSADL…CFTVDIYQID (96 aa)) is a DNA-binding region (TF-B3 1). Disordered regions lie at residues 123–142 (SATI…NNIY) and 153–194 (SWSE…KMKV). Residues 133–142 (NKREQRNNIY) are compositionally biased toward basic and acidic residues. Positions 209–301 (VPEFTLTIKK…PTEMLVRVSK (93 aa)) form a DNA-binding region, TF-B3 2.

It localises to the nucleus. This is B3 domain-containing protein At5g18090 from Arabidopsis thaliana (Mouse-ear cress).